The chain runs to 25 residues: Cruzioseptin-13 (25 aa).

The residue at position 25 (Asn25) is an Asparagine amide.

Expressed by the skin glands.

Its subcellular location is the secreted. Functionally, has antimicrobial activity. The sequence is that of Cruzioseptin-13 from Cruziohyla calcarifer (Splendid leaf frog).